Here is a 201-residue protein sequence, read N- to C-terminus: U1 small nuclear ribonucleoprotein C (201 aa).

Residues 4 to 36 (YYCEYCDIYLTHSSPVGRRQHNQGRKHISAKIE) form a Matrin-type zinc finger. Over residues 137 to 154 (IQKPYNNFDNKNNNYNNK) the composition is skewed to low complexity. A disordered region spans residues 137 to 176 (IQKPYNNFDNKNNNYNNKPITNSSYKNDKQDYRNNNENND).

The protein belongs to the U1 small nuclear ribonucleoprotein C family. As to quaternary structure, U1 snRNP is composed of the 7 core Sm proteins B/B', D1, D2, D3, E, F and G that assemble in a heptameric protein ring on the Sm site of the small nuclear RNA to form the core snRNP, and at least 3 U1 snRNP-specific proteins U1-70K, U1-A and U1-C. U1-C interacts with U1 snRNA and the 5' splice-site region of the pre-mRNA.

The protein localises to the nucleus. Component of the spliceosomal U1 snRNP, which is essential for recognition of the pre-mRNA 5' splice-site and the subsequent assembly of the spliceosome. U1-C is directly involved in initial 5' splice-site recognition for both constitutive and regulated alternative splicing. The interaction with the 5' splice-site seems to precede base-pairing between the pre-mRNA and the U1 snRNA. Stimulates commitment or early (E) complex formation by stabilizing the base pairing of the 5' end of the U1 snRNA and the 5' splice-site region. This Plasmodium yoelii yoelii protein is U1 small nuclear ribonucleoprotein C.